Here is a 208-residue protein sequence, read N- to C-terminus: Methylthioribulose-1-phosphate dehydratase (208 aa).

2 residues coordinate Zn(2+): histidine 98 and histidine 100.

Belongs to the aldolase class II family. MtnB subfamily. Zn(2+) is required as a cofactor.

It carries out the reaction 5-(methylsulfanyl)-D-ribulose 1-phosphate = 5-methylsulfanyl-2,3-dioxopentyl phosphate + H2O. It functions in the pathway amino-acid biosynthesis; L-methionine biosynthesis via salvage pathway; L-methionine from S-methyl-5-thio-alpha-D-ribose 1-phosphate: step 2/6. Its function is as follows. Catalyzes the dehydration of methylthioribulose-1-phosphate (MTRu-1-P) into 2,3-diketo-5-methylthiopentyl-1-phosphate (DK-MTP-1-P). In Hahella chejuensis (strain KCTC 2396), this protein is Methylthioribulose-1-phosphate dehydratase.